The primary structure comprises 107 residues: Serine-rich and transmembrane domain-containing protein 1 (107 aa).

A helical membrane pass occupies residues 43 to 63 (IYVSIFLSLLAFLLLLLIIAL).

It is found in the membrane. In Homo sapiens (Human), this protein is Serine-rich and transmembrane domain-containing protein 1 (SERTM1).